The chain runs to 256 residues: Small ribosomal subunit protein uS2 (256 aa).

This sequence belongs to the universal ribosomal protein uS2 family.

This is Small ribosomal subunit protein uS2 from Acidiphilium cryptum (strain JF-5).